The chain runs to 128 residues: DNA-directed RNA polymerase subunit omega (128 aa).

The protein belongs to the RNA polymerase subunit omega family. In terms of assembly, the RNAP catalytic core consists of 2 alpha, 1 beta, 1 beta' and 1 omega subunit. When a sigma factor is associated with the core the holoenzyme is formed, which can initiate transcription.

It carries out the reaction RNA(n) + a ribonucleoside 5'-triphosphate = RNA(n+1) + diphosphate. Its function is as follows. Promotes RNA polymerase assembly. Latches the N- and C-terminal regions of the beta' subunit thereby facilitating its interaction with the beta and alpha subunits. The protein is DNA-directed RNA polymerase subunit omega of Azorhizobium caulinodans (strain ATCC 43989 / DSM 5975 / JCM 20966 / LMG 6465 / NBRC 14845 / NCIMB 13405 / ORS 571).